The primary structure comprises 167 residues: Lipoprotein signal peptidase (167 aa).

4 consecutive transmembrane segments (helical) span residues 8 to 28 (TFLT…VVLL), 46 to 66 (WGHF…FGLF), 68 to 88 (QYKI…ALFL), and 101 to 121 (VALT…LLYG). Catalysis depends on residues aspartate 125 and aspartate 143. A helical membrane pass occupies residues 139-159 (FNLADAFISIGTLLLIGHLYF).

This sequence belongs to the peptidase A8 family.

Its subcellular location is the cell inner membrane. The catalysed reaction is Release of signal peptides from bacterial membrane prolipoproteins. Hydrolyzes -Xaa-Yaa-Zaa-|-(S,diacylglyceryl)Cys-, in which Xaa is hydrophobic (preferably Leu), and Yaa (Ala or Ser) and Zaa (Gly or Ala) have small, neutral side chains.. Its pathway is protein modification; lipoprotein biosynthesis (signal peptide cleavage). Its function is as follows. This protein specifically catalyzes the removal of signal peptides from prolipoproteins. The protein is Lipoprotein signal peptidase of Chlamydia trachomatis serovar A (strain ATCC VR-571B / DSM 19440 / HAR-13).